The chain runs to 425 residues: Acyl-lipid (8-3)-desaturase (425 aa).

The segment at 1 to 25 is disordered; it reads MPPRDSYSYAAPPSAQLHEVDTPQE. The 76-residue stretch at 18–93 folds into the Cytochrome b5 heme-binding domain; sequence HEVDTPQEHD…SRPVHKGYSP (76 aa). Heme is bound by residues histidine 47 and histidine 69. Residues 134–154 form a helical membrane-spanning segment; sequence VAGAALIWHGYTFAGIAMLGV. The Histidine box-1 signature appears at 164–168; the sequence is HEGGH. A helical transmembrane segment spans residues 175-197; sequence IAFDRAIQVACYGLGCGMSGAWW. Positions 201 to 206 match the Histidine box-2 motif; sequence HNKHHA. Helical transmembrane passes span 241-261 and 297-317; these read WLSM…ALGW and GAGY…MYIF. Residues 365 to 369 carry the Histidine box-3 motif; that stretch reads QIEHH.

Belongs to the fatty acid desaturase type 1 family. It depends on Fe(2+) as a cofactor.

The protein resides in the membrane. The enzyme catalyses an (8Z,11Z,14Z)-icosatrienoyl-containing glycerolipid + 2 Fe(II)-[cytochrome b5] + O2 + 2 H(+) = (5Z,8Z,11Z,14Z)-eicosatetraenoyl-containing glycerolipid + 2 Fe(III)-[cytochrome b5] + 2 H2O. It catalyses the reaction an (8Z,11Z,14Z,17Z)-eicosatetraenoyl-containing glycerolipid + 2 Fe(II)-[cytochrome b5] + O2 + 2 H(+) = a (5Z,8Z,11Z,14Z,17Z)-eicosapentaenoyl-containing glycerolipid + 2 Fe(III)-[cytochrome b5] + 2 H2O. Its function is as follows. Fatty acid desaturase that introduces a cis double bond at the 5-position in 20-carbon polyunsaturated fatty acids incorporated in a glycerolipid that contain a Delta(8) double bond. The protein is Acyl-lipid (8-3)-desaturase of Rebecca salina (Marine microalga).